Reading from the N-terminus, the 135-residue chain is MVLETISKIIKTQLPAYLKKFPLPETIGGFARLTVLDWLRLLPLLGILTLLGYLTIRPFLPKKKKQKDSLINLKIQKENPKVVNEIDIEDLKSTNVCYCRCWRSKTFPVCDKSHIKHNELTGDNVGPLILKKKII.

Over 1 to 37 (MVLETISKIIKTQLPAYLKKFPLPETIGGFARLTVLD) the chain is Lumenal. The helical transmembrane segment at 38–60 (WLRLLPLLGILTLLGYLTIRPFL) threads the bilayer. Residues 61–135 (PKKKKQKDSL…GPLILKKKII (75 aa)) are Cytoplasmic-facing. The [2Fe-2S] cluster site is built by Cys99, Cys101, Cys110, and His114.

Belongs to the CISD protein family. CISD2 subfamily. Homodimer. Requires [2Fe-2S] cluster as cofactor.

The protein resides in the endoplasmic reticulum membrane. Its subcellular location is the mitochondrion outer membrane. In terms of biological role, regulator of autophagy that contributes to antagonize becn1-mediated cellular autophagy at the endoplasmic reticulum. Participates in the interaction of bcl2 with becn1 and is required for bcl2-mediated depression of endoplasmic reticulum Ca(2+) stores during autophagy. This Oncorhynchus mykiss (Rainbow trout) protein is CDGSH iron-sulfur domain-containing protein 2B (cisd2b).